The chain runs to 356 residues: Tungsten-containing aldehyde ferredoxin oxidoreductase cofactor-modifying protein (356 aa).

In terms of domain architecture, Radical SAM core spans 1–214; the sequence is MKYLYLEITS…PIVNELYKIA (214 aa). Cysteine 12, cysteine 16, and cysteine 19 together coordinate [4Fe-4S] cluster.

The protein belongs to the radical SAM superfamily. It depends on [4Fe-4S] cluster as a cofactor.

Functionally, involved in the biosynthesis of a molybdopterin-based tungsten cofactor. The protein is Tungsten-containing aldehyde ferredoxin oxidoreductase cofactor-modifying protein (cmo) of Pyrococcus furiosus (strain ATCC 43587 / DSM 3638 / JCM 8422 / Vc1).